Here is a 127-residue protein sequence, read N- to C-terminus: Nuclear transport factor 2 (127 aa).

K4 carries the N6-acetyllysine modification. Residues 10–121 (IGSSFIQHYY…WVCTNDMFRL (112 aa)) enclose the NTF2 domain.

In terms of assembly, homodimer. Interacts with RAN (GDP-bound form); the interaction is direct and regulates RAN nuclear import. Interacts with the nucleoporins NUP54, NUP58 and NUP62 (via FG repeats); recruits NUTF2 to the nuclear pore complex a step required for NUTF2-mediated GDP-bound RAN nuclear import. Interacts with CAPG; mediates its nuclear import.

The protein resides in the cytoplasm. It is found in the cytosol. It localises to the nucleus outer membrane. Its subcellular location is the nucleus. The protein localises to the nuclear pore complex. The protein resides in the nucleus inner membrane. It is found in the nucleoplasm. Mediates the import of GDP-bound RAN from the cytoplasm into the nucleus which is essential for the function of RAN in cargo receptor-mediated nucleocytoplasmic transport. Thereby, plays indirectly a more general role in cargo receptor-mediated nucleocytoplasmic transport. Interacts with GDP-bound RAN in the cytosol, recruits it to the nuclear pore complex via its interaction with nucleoporins and promotes its nuclear import. This Bos taurus (Bovine) protein is Nuclear transport factor 2.